The sequence spans 195 residues: 7-methyl-GTP pyrophosphatase (195 aa).

The active-site Proton acceptor is Asp70.

Belongs to the Maf family. YceF subfamily. It depends on a divalent metal cation as a cofactor.

Its subcellular location is the cytoplasm. The enzyme catalyses N(7)-methyl-GTP + H2O = N(7)-methyl-GMP + diphosphate + H(+). Nucleoside triphosphate pyrophosphatase that hydrolyzes 7-methyl-GTP (m(7)GTP). May have a dual role in cell division arrest and in preventing the incorporation of modified nucleotides into cellular nucleic acids. This is 7-methyl-GTP pyrophosphatase from Shewanella sp. (strain MR-4).